We begin with the raw amino-acid sequence, 189 residues long: Thermostable direct hemolysin 2 (189 aa).

Residues 1 to 24 form the signal peptide; the sequence is MKYRYFAKKSFLFISMLAAFKTFA. The cysteines at positions 175 and 185 are disulfide-linked.

This sequence belongs to the TDH hemolysin family. As to quaternary structure, homodimer.

Bacterial hemolysins are exotoxins that attack blood cell membranes and cause cell rupture by mechanisms not clearly defined. The protein is Thermostable direct hemolysin 2 (tdh2) of Vibrio parahaemolyticus serotype O3:K6 (strain RIMD 2210633).